The sequence spans 186 residues: Putative CTD phosphatase-like protein 355R (186 aa).

Residues Glu-2–Leu-182 enclose the FCP1 homology domain.

This sequence belongs to the IIV-6 355R family.

Its function is as follows. May function as a phosphatase. This chain is Putative CTD phosphatase-like protein 355R, found in Aedes vexans (Inland floodwater mosquito).